Consider the following 408-residue polypeptide: Probable cysteine desulfurase (408 aa).

Position 225 is an N6-(pyridoxal phosphate)lysine (lysine 225).

This sequence belongs to the class-V pyridoxal-phosphate-dependent aminotransferase family. Csd subfamily. Pyridoxal 5'-phosphate serves as cofactor.

It carries out the reaction (sulfur carrier)-H + L-cysteine = (sulfur carrier)-SH + L-alanine. Catalyzes the removal of elemental sulfur and selenium atoms from L-cysteine, L-cystine, L-selenocysteine, and L-selenocystine to produce L-alanine. The protein is Probable cysteine desulfurase (csd) of Mycoplasma pneumoniae (strain ATCC 29342 / M129 / Subtype 1) (Mycoplasmoides pneumoniae).